Here is a 198-residue protein sequence, read N- to C-terminus: Clytin (198 aa).

A propeptide spanning residues 1–9 (MADTASKYA) is cleaved from the precursor. EF-hand domains are found at residues 20-55 (KWVNRHKFMFNFLDINGDGKITLDEIVSKASDDICA), 60-95 (TPEQTKRHQDAVEAFFKKIGMDYGKEVEFPAFVDGW), 119-148 (EAVFDIFDKDGSGSISLDEWKAYGRISGIC), and 149-184 (SSDEDAEKTFKHCDLDNSGKLDVDEMTRQHLGFWYT). Residues Asp33, Asn35, Asp37, Lys39, and Glu44 each contribute to the Ca(2+) site. Positions 126, 128, 130, 132, 137, 162, 164, 166, 168, and 173 each coordinate Ca(2+).

The protein belongs to the aequorin family.

In terms of biological role, ca(2+)-dependent bioluminescence photoprotein. Displays an emission peak at 470 nm (blue light). Trace amounts of calcium ion trigger the intramolecular oxidation of the chromophore, coelenterazine into coelenteramide and CO(2) with the concomitant emission of light. The polypeptide is Clytin (Clytia gregaria (Gregarious jellyfish)).